We begin with the raw amino-acid sequence, 601 residues long: Terpinolene synthase, chloroplastic (601 aa).

The transit peptide at 1–32 directs the protein to the chloroplast; it reads MSTFVISNSMHVGISFSFLHKLPQTPPPQVVC. Mg(2+) is bound by residues aspartate 354, aspartate 358, aspartate 498, threonine 502, and glutamate 506. The short motif at 354–358 is the DDXXD motif element; that stretch reads DDVYD.

It belongs to the terpene synthase family. Tpsd subfamily. It depends on Mg(2+) as a cofactor. Requires Mn(2+) as cofactor.

The protein resides in the plastid. It is found in the chloroplast. The enzyme catalyses (2E)-geranyl diphosphate = terpinolene + diphosphate. It functions in the pathway secondary metabolite biosynthesis; terpenoid biosynthesis. Functionally, monoterpene synthase that catalyzes the formation of terpinolene and other monoterpenes from geranyl diphosphate. This chain is Terpinolene synthase, chloroplastic (TES), found in Ocimum basilicum (Sweet basil).